Reading from the N-terminus, the 349-residue chain is KH domain-containing, RNA-binding, signal transduction-associated protein 2 (349 aa).

Residues 65-135 (LIPVKQYPKF…HLSDELHVLI (71 aa)) enclose the KH domain. Disordered stretches follow at residues 181 to 263 (SEES…PPPA) and 320 to 349 (EEWTTTRSSLKAPPPRSARGGYREHPYGRY). Residues 218–231 (RGVLTPRGTTVTRG) are compositionally biased toward low complexity. Omega-N-methylarginine is present on residues Arg230 and Arg240. The span at 340–349 (GYREHPYGRY) shows a compositional bias: basic and acidic residues.

The protein belongs to the KHDRBS family. As to quaternary structure, self-associates to form homooligomers. Interacts with SAFB, SFRS9 and YTHDC1. Found in a complex with KHDRBS1, KHDRBS2 and KHDRBS3. Interacts with RBMX. Interacts with the SH3 domains of FYN and PLCG1. Interacts with the SH2 domains of FYN, GRAP2, PLCG1 and RASA1. Interacts with RBMX. Post-translationally, methylated. Phosphorylated on tyrosine residues by FYN. Tyrosine phosphorylated by PTK6 and SRC. Tyrosine phosphorylated by SRC during mitosis. As to expression, expressed in the cortex, cerebellum, striatum, midbrain, brainstem and thalamus of the brain (at protein level). Expressed in neurons (at protein level). Expressed in brain and testis. Expressed in the dentate gyrus of the hippocampus.

The protein resides in the nucleus. Functionally, RNA-binding protein that plays a role in the regulation of alternative splicing and influences mRNA splice site selection and exon inclusion. Its phosphorylation by FYN inhibits its ability to regulate splice site selection. Induces an increased concentration-dependent incorporation of exon in CD44 pre-mRNA by direct binding to purine-rich exonic enhancer. May function as an adapter protein for Src kinases during mitosis. Binds both poly(A) and poly(U) homopolymers. Phosphorylation by PTK6 inhibits its RNA-binding ability. This is KH domain-containing, RNA-binding, signal transduction-associated protein 2 (Khdrbs2) from Rattus norvegicus (Rat).